Reading from the N-terminus, the 105-residue chain is Nucleoid-associated protein SaurJH1_0513 (105 aa).

The tract at residues 1–33 (MRGGGNMQQMMKQMQKMQKKMAQEQKKLKEERI) is disordered. Over residues 7 to 16 (MQQMMKQMQK) the composition is skewed to low complexity. A compositionally biased stretch (basic and acidic residues) spans 21–33 (MAQEQKKLKEERI).

The protein belongs to the YbaB/EbfC family. Homodimer.

The protein resides in the cytoplasm. It is found in the nucleoid. Functionally, binds to DNA and alters its conformation. May be involved in regulation of gene expression, nucleoid organization and DNA protection. The sequence is that of Nucleoid-associated protein SaurJH1_0513 from Staphylococcus aureus (strain JH1).